Reading from the N-terminus, the 1124-residue chain is Anillin (1124 aa).

Residue M1 is modified to N-acetylmethionine. Positions 1 to 25 (MDPFTEKLLERTRARRENLQRKMAE) are enriched in basic and acidic residues. Residues 1 to 45 (MDPFTEKLLERTRARRENLQRKMAERPTAAPRSMTHAKRARQPLS) form a required for ubiquitination region. Disordered stretches follow at residues 1–113 (MDPF…ADTI) and 136–196 (ATAA…ATPV). Residues 1–155 (MDPFTEKLLE…MQKLAEQRRR (155 aa)) form an interaction with CD2AP region. The nuclear localization stretch occupies residues 1-230 (MDPFTEKLLE…AKQNSVQEQP (230 aa)). S54 and S72 each carry phosphoserine. The span at 77–96 (VEVSNLENKQPVESTSAKSC) shows a compositional bias: polar residues. 2 positions are modified to phosphoserine: S97 and S102. Over residues 97 to 108 (SPSPVSPQVQPQ) the composition is skewed to low complexity. Over residues 148–158 (KLAEQRRRWDN) the composition is skewed to basic and acidic residues. Phosphoserine occurs at positions 172 and 182. T194 carries the post-translational modification Phosphothreonine. 2 positions are modified to phosphoserine: S225 and S252. Residues 231 to 676 (GTACLSKFSS…RDLLYSIDAY (446 aa)) are interaction with F-actin. A Glycyl lysine isopeptide (Lys-Gly) (interchain with G-Cter in SUMO1) cross-link involves residue K254. A Phosphoserine modification is found at S261. Positions 294–305 (TSPVKSTTSITD) are enriched in polar residues. A disordered region spans residues 294 to 328 (TSPVKSTTSITDAKSCEGQNPELLPKTPISPLKTG). Residue T320 is modified to Phosphothreonine. Phosphoserine occurs at positions 323 and 339. T364 bears the Phosphothreonine mark. K371 carries the post-translational modification N6-acetyllysine. A compositionally biased stretch (basic and acidic residues) spans 380 to 389 (RCQEHSKESP). The segment at 380 to 399 (RCQEHSKESPARSTPHRTPI) is disordered. Residues T397 and T401 each carry the phosphothreonine modification. S417, S419, S449, S485, S518, S553, and S561 each carry phosphoserine. The stretch at 569–604 (FSDVLEEGELDMEKSQEEMDQALAESSEEQEDALNI) forms a coiled coil. Disordered stretches follow at residues 579–600 (DMEKSQEEMDQALAESSEEQED) and 625–664 (LVSTPRLELKDTSRSDESPKPGKFQRTRVPRAESGDSLGS). 2 stretches are compositionally biased toward basic and acidic residues: residues 631-644 (LELKDTSRSDESPK) and 654-664 (PRAESGDSLGS). Phosphoserine is present on residues S637, S642, S658, S661, and S664. A Phosphotyrosine modification is found at Y671. Phosphoserine occurs at positions 678, 688, 792, and 927. The interval 730–1124 (QQTVIYQASQ…DACYKPIGKP (395 aa)) is localization to the cleavage furrow. Residues 983–1107 (SVEERGFLTI…WMQKLNQVLV (125 aa)) form the PH domain.

In terms of assembly, interacts with F-actin. Interacts with CD2AP. May interact with RHOA. Interacts with FZR1/CDH1 during mitotic exit. Phosphorylated during mitosis. Post-translationally, ubiquitinated, and this requires FZR1/CDH1. As to expression, ubiquitously expressed. Present at highest levels in the brain, at high levels in the placenta and testis, at intermediate levels in the intestine, ovary, skeletal muscle and thymus and at lower levels in heart, kidney, liver, lung, pancreas, prostate and spleen. In the kidney, it is widely expressed in tubules, but sparsely expressed in the glomerulus. Expression is significantly increased in renal biopsy specimens from idiopathic FSGS. Overexpressed in many tumor types including breast, colorectal, endometrial, hepatic, kidney, lung, ovarian and pancreatic tumors.

Its subcellular location is the nucleus. It is found in the cytoplasm. The protein localises to the cytoskeleton. It localises to the cell cortex. The protein resides in the cell projection. Its subcellular location is the bleb. Its function is as follows. Required for cytokinesis. Essential for the structural integrity of the cleavage furrow and for completion of cleavage furrow ingression. Plays a role in bleb assembly during metaphase and anaphase of mitosis. May play a significant role in podocyte cell migration. This Homo sapiens (Human) protein is Anillin (ANLN).